The chain runs to 102 residues: uncharacterized protein (102 aa).

The segment at 1-21 is disordered; that stretch reads MAESVNENNNNAGDSNGSGRT. An N-linked (GlcNAc...) asparagine glycan is attached at N16. Residues 24–44 traverse the membrane as a helical segment; that stretch reads NTIVTIVVVVIVVTLIIILAT. The segment at 49–102 is disordered; the sequence is IGGSGKKVGAEEPATKLSSKSDDRNGGPNKKSPAKGSSKDDNNTEESVQSNLYG. Over residues 56–73 the composition is skewed to basic and acidic residues; that stretch reads VGAEEPATKLSSKSDDRN. N-linked (GlcNAc...) asparagine glycosylation is present at N90. Over residues 93–102 the composition is skewed to polar residues; that stretch reads EESVQSNLYG.

The protein localises to the membrane. This is an uncharacterized protein from Encephalitozoon cuniculi (strain GB-M1) (Microsporidian parasite).